A 396-amino-acid polypeptide reads, in one-letter code: Phosphoglycerate kinase (396 aa).

Substrate-binding positions include 21–23 (DIN), Arg36, 59–62 (HFGR), Arg118, and Arg151. Residues Lys201, Glu323, and 353-356 (GGDT) contribute to the ATP site.

The protein belongs to the phosphoglycerate kinase family. Monomer.

It is found in the cytoplasm. The enzyme catalyses (2R)-3-phosphoglycerate + ATP = (2R)-3-phospho-glyceroyl phosphate + ADP. Its pathway is carbohydrate degradation; glycolysis; pyruvate from D-glyceraldehyde 3-phosphate: step 2/5. In Ruegeria sp. (strain TM1040) (Silicibacter sp.), this protein is Phosphoglycerate kinase.